Consider the following 410-residue polypeptide: Na(+)-translocating NADH-quinone reductase subunit B (410 aa).

3 helical membrane passes run 56–76, 119–139, and 159–179; these read MMIL…YNVG, LFGA…GGFW, and SILF…ALGI. Threonine 232 bears the FMN phosphoryl threonine mark. Helical transmembrane passes span 266–286, 293–313, 318–338, 347–367, and 377–397; these read GSIG…IVFA, IIAG…FIGS, MFAM…GMLF, SFTN…CVLI, and GMML…YFVA.

The protein belongs to the NqrB/RnfD family. In terms of assembly, composed of six subunits; NqrA, NqrB, NqrC, NqrD, NqrE and NqrF. The cofactor is FMN.

The protein localises to the cell inner membrane. The enzyme catalyses a ubiquinone + n Na(+)(in) + NADH + H(+) = a ubiquinol + n Na(+)(out) + NAD(+). Functionally, NQR complex catalyzes the reduction of ubiquinone-1 to ubiquinol by two successive reactions, coupled with the transport of Na(+) ions from the cytoplasm to the periplasm. NqrA to NqrE are probably involved in the second step, the conversion of ubisemiquinone to ubiquinol. This Neisseria meningitidis serogroup B (strain ATCC BAA-335 / MC58) protein is Na(+)-translocating NADH-quinone reductase subunit B.